The following is a 312-amino-acid chain: Glyceraldehyde-3-phosphate dehydrogenase, cytosolic (312 aa).

Residues 5–6 (RI) and Asp-27 each bind NAD(+). D-glyceraldehyde 3-phosphate-binding positions include 144-146 (SCT), Thr-175, 204-205 (TG), and Arg-227. The active-site Nucleophile is Cys-145. Asn-309 provides a ligand contact to NAD(+).

It belongs to the glyceraldehyde-3-phosphate dehydrogenase family. In terms of assembly, homotetramer.

The protein localises to the cytoplasm. The enzyme catalyses D-glyceraldehyde 3-phosphate + phosphate + NAD(+) = (2R)-3-phospho-glyceroyl phosphate + NADH + H(+). The protein operates within carbohydrate degradation; glycolysis; pyruvate from D-glyceraldehyde 3-phosphate: step 1/5. In terms of biological role, key enzyme in glycolysis that catalyzes the first step of the pathway by converting D-glyceraldehyde 3-phosphate (G3P) into 3-phospho-D-glyceroyl phosphate. Essential for the maintenance of cellular ATP levels and carbohydrate metabolism. This is Glyceraldehyde-3-phosphate dehydrogenase, cytosolic (GapC) from Scenedesmus vacuolatus (Green alga).